The sequence spans 401 residues: MASTTNGVNGHKASQPQSLIQTLNNIGADSFSNDGERIQAVLAAYALVSRLETPWEFVARTCMGQPALGAALKVAKDLKLYDKWHELGDGEMTCEQLSELVSCDSALLFRILRHLAANHVLEETSIGVFKPTKLSISFTVPVFGEWINHLYDATTPCFFKMPEFLAQNGYKNPVDPNNGVFQAAKGWKGDMFDYYKSHPVEGASFDHVMGGVMANQAGWLEIFPHNKLLETADAQSPLVVDVGGNIGHDIERFRQEHPETASRLYLEDLPEVVKRSKCPDDVNKVGYDFFTPQPIKGARAYYMHGVLHDWSEEPARKILEMQKEAMKPGYSTLLIHDHIAPESLAHPHTTAYDLTMMVMVAGVERREAHWRALLKSAGYKLVRIWRSPLAVQGVIEAELDQ.

S-adenosyl-L-methionine contacts are provided by residues 243–244 (GG) and Asp-268. The active-site Proton acceptor is His-308.

Belongs to the class I-like SAM-binding methyltransferase superfamily. Cation-independent O-methyltransferase family. COMT subfamily.

It functions in the pathway secondary metabolite biosynthesis; terpenoid biosynthesis. Its function is as follows. O-methyltransferase; part of the gene cluster that mediates the biosynthesis of the phthalide-terpenoid hybrid 11'-O-desmethylfendlerol. Within the pathway, mfmE catalyzes the 7-O-methylation of the phthalide 5,7-dihydroxy-4-(hydroxymethyl)-6-methylphthalide to yield 5-hydroxy-4-(hydroxymethyl)-7-methoxy-6-methylphthalide. The biosynthesis of 11'-O-desmethylfendlerol begins with the NR-PKS mfmB that forms 3,5-dimethylorsellinic acid (DMOA), which is then transformed into the phthalide 5,7-dihydroxy-4-(hydroxymethyl)-6-methylphthalide by the cytochrome P450 monooxygenase mfmA and the hydrolase mfmC. Subsequently, the methyltransferase mfmE catalyzes 7-O-methylation to yield 5-hydroxy-4-(hydroxymethyl)-7-methoxy-6-methylphthalide, which undergoes C-3 hydroxylation by the cytochrome P450 monooxygenase mfmF. The resultant cyclopolic acid (2,5-dihydroxy-4-(hydroxymethyl)-7-methoxy-6-methylphthalide) is then farnesylated by the DMATS-type prenyltransferase mfmD to afford 5-O-farnesylcyclopolic acid. Finally, the Pyr4-family terpene cyclase mfmH cyclizes the farnesyl moiety of 5-O-farnesylcyclopolic acid into a drimane-like structure, thus completing the biosynthesis of 11'-O-desmethylfendlerol. The polypeptide is O-methyltransferase mfmE (Annulohypoxylon moriforme (Filamentous fungus)).